A 204-amino-acid chain; its full sequence is Large ribosomal subunit protein uL4 (204 aa).

The disordered stretch occupies residues 44–76; sequence RAGTHRTKGMGEISGTTKKPYRQKGTGSARQGS.

It belongs to the universal ribosomal protein uL4 family. In terms of assembly, part of the 50S ribosomal subunit.

Functionally, one of the primary rRNA binding proteins, this protein initially binds near the 5'-end of the 23S rRNA. It is important during the early stages of 50S assembly. It makes multiple contacts with different domains of the 23S rRNA in the assembled 50S subunit and ribosome. Its function is as follows. Forms part of the polypeptide exit tunnel. This is Large ribosomal subunit protein uL4 from Gluconobacter oxydans (strain 621H) (Gluconobacter suboxydans).